The primary structure comprises 195 residues: Imidazoleglycerol-phosphate dehydratase (195 aa).

It belongs to the imidazoleglycerol-phosphate dehydratase family.

The protein localises to the cytoplasm. The catalysed reaction is D-erythro-1-(imidazol-4-yl)glycerol 3-phosphate = 3-(imidazol-4-yl)-2-oxopropyl phosphate + H2O. It functions in the pathway amino-acid biosynthesis; L-histidine biosynthesis; L-histidine from 5-phospho-alpha-D-ribose 1-diphosphate: step 6/9. The sequence is that of Imidazoleglycerol-phosphate dehydratase from Geobacillus thermodenitrificans (strain NG80-2).